The chain runs to 179 residues: Large ribosomal subunit protein uL5 (179 aa).

The protein belongs to the universal ribosomal protein uL5 family. In terms of assembly, part of the 50S ribosomal subunit; part of the 5S rRNA/L5/L18/L25 subcomplex. Contacts the 5S rRNA and the P site tRNA. Forms a bridge to the 30S subunit in the 70S ribosome.

Functionally, this is one of the proteins that bind and probably mediate the attachment of the 5S RNA into the large ribosomal subunit, where it forms part of the central protuberance. In the 70S ribosome it contacts protein S13 of the 30S subunit (bridge B1b), connecting the 2 subunits; this bridge is implicated in subunit movement. Contacts the P site tRNA; the 5S rRNA and some of its associated proteins might help stabilize positioning of ribosome-bound tRNAs. This chain is Large ribosomal subunit protein uL5, found in Aliivibrio salmonicida (strain LFI1238) (Vibrio salmonicida (strain LFI1238)).